Here is a 219-residue protein sequence, read N- to C-terminus: Salivary IL-4-inducing protein (219 aa).

The N-terminal stretch at 1–19 (MKYLLTLLMALSLVNLMLT) is a signal peptide. Residues 19–109 (TRPTPEDDGG…KNDPRETYNK (91 aa)) form a disordered region. Low complexity predominate over residues 30 to 43 (SEEPQTQETTGETT). Basic and acidic residues predominate over residues 72–107 (DDTAKKEDDGESKDGEGSEKSDKEKGEPKNDPRETY).

As to expression, salivary gland (at protein level).

It localises to the secreted. In terms of biological role, induces expression of IL4 in host skin by diverting host CD4 cells away from Th1 and towards Th2 responsiveness. Induces expression of IL10 in host skin. Down-regulates expression of IL12B, IFN-gamma (IFNG) and TNF-alpha (TNF) in host skin. The chain is Salivary IL-4-inducing protein from Aedes aegypti (Yellowfever mosquito).